Consider the following 286-residue polypeptide: ATP synthase gamma chain (286 aa).

This sequence belongs to the ATPase gamma chain family. F-type ATPases have 2 components, CF(1) - the catalytic core - and CF(0) - the membrane proton channel. CF(1) has five subunits: alpha(3), beta(3), gamma(1), delta(1), epsilon(1). CF(0) has three main subunits: a, b and c.

Its subcellular location is the cell inner membrane. Functionally, produces ATP from ADP in the presence of a proton gradient across the membrane. The gamma chain is believed to be important in regulating ATPase activity and the flow of protons through the CF(0) complex. The chain is ATP synthase gamma chain from Pseudomonas entomophila (strain L48).